The primary structure comprises 210 residues: Thymidylate kinase (210 aa).

An ATP-binding site is contributed by 10–17 (GIDGCGKT).

This sequence belongs to the thymidylate kinase family.

It catalyses the reaction dTMP + ATP = dTDP + ADP. Functionally, phosphorylation of dTMP to form dTDP in both de novo and salvage pathways of dTTP synthesis. The protein is Thymidylate kinase of Prochlorococcus marinus (strain MIT 9515).